Consider the following 248-residue polypeptide: Proteasome subunit alpha type-3 (248 aa).

It belongs to the peptidase T1A family. In terms of assembly, the 26S proteasome consists of a 20S proteasome core and two 19S regulatory subunits. The 20S proteasome core is composed of 28 subunits that are arranged in four stacked rings, resulting in a barrel-shaped structure. The two end rings are each formed by seven alpha subunits, and the two central rings are each formed by seven beta subunits. The catalytic chamber with the active sites is on the inside of the barrel.

It localises to the cytoplasm. The protein resides in the nucleus. Functionally, the proteasome is a multicatalytic proteinase complex which is characterized by its ability to cleave peptides with Arg, Phe, Tyr, Leu, and Glu adjacent to the leaving group at neutral or slightly basic pH. The proteasome has an ATP-dependent proteolytic activity. The polypeptide is Proteasome subunit alpha type-3 (psmA3) (Dictyostelium discoideum (Social amoeba)).